The chain runs to 425 residues: Phosphomethylpyrimidine synthase (425 aa).

Substrate is bound by residues M94, Y123, H162, 184–186 (SRG), 225–228 (NGMR), and E264. H268 serves as a coordination point for Zn(2+). Position 291 (Y291) interacts with substrate. H332 serves as a coordination point for Zn(2+). The [4Fe-4S] cluster site is built by C407, C410, and C414.

Belongs to the ThiC family. Requires [4Fe-4S] cluster as cofactor.

It carries out the reaction 5-amino-1-(5-phospho-beta-D-ribosyl)imidazole + S-adenosyl-L-methionine = 4-amino-2-methyl-5-(phosphooxymethyl)pyrimidine + CO + 5'-deoxyadenosine + formate + L-methionine + 3 H(+). Its pathway is cofactor biosynthesis; thiamine diphosphate biosynthesis. Catalyzes the synthesis of the hydroxymethylpyrimidine phosphate (HMP-P) moiety of thiamine from aminoimidazole ribotide (AIR) in a radical S-adenosyl-L-methionine (SAM)-dependent reaction. This chain is Phosphomethylpyrimidine synthase, found in Methanocorpusculum labreanum (strain ATCC 43576 / DSM 4855 / Z).